The sequence spans 529 residues: Type I inositol polyphosphate 5-phosphatase 5 (529 aa).

2 catalytic regions span residues 371 to 386 (DRVL…VALT) and 451 to 466 (KRRT…WKGE).

Belongs to the inositol polyphosphate 5-phosphatase family.

May be involved in the regulation of root hairs development. Required for restricting both the size of the root-hair initiation site and the width of the root hairs during the transition to tip growth, but is not required for normal subsequent tip growth. This chain is Type I inositol polyphosphate 5-phosphatase 5, found in Arabidopsis thaliana (Mouse-ear cress).